The primary structure comprises 218 residues: Cytidylate kinase (218 aa).

7 to 15 (GPSASGKSS) is a binding site for ATP.

The protein belongs to the cytidylate kinase family. Type 1 subfamily.

Its subcellular location is the cytoplasm. It catalyses the reaction CMP + ATP = CDP + ADP. It carries out the reaction dCMP + ATP = dCDP + ADP. This chain is Cytidylate kinase, found in Borrelia duttonii (strain Ly).